A 251-amino-acid polypeptide reads, in one-letter code: tRNA (guanine-N(7)-)-methyltransferase (251 aa).

Positions 80, 105, 132, and 155 each coordinate S-adenosyl-L-methionine. Asp-155 is a catalytic residue. Substrate is bound by residues Lys-159, Asp-191, and 228–231; that span reads TKFE.

It belongs to the class I-like SAM-binding methyltransferase superfamily. TrmB family.

It catalyses the reaction guanosine(46) in tRNA + S-adenosyl-L-methionine = N(7)-methylguanosine(46) in tRNA + S-adenosyl-L-homocysteine. It participates in tRNA modification; N(7)-methylguanine-tRNA biosynthesis. Its function is as follows. Catalyzes the formation of N(7)-methylguanine at position 46 (m7G46) in tRNA. This is tRNA (guanine-N(7)-)-methyltransferase from Histophilus somni (strain 129Pt) (Haemophilus somnus).